A 574-amino-acid chain; its full sequence is Zinc finger and BTB domain-containing protein 3 (574 aa).

Residues cysteine 74–glycine 142 form the BTB domain. Disordered stretches follow at residues alanine 175–glutamate 277 and serine 305–proline 346. Glycyl lysine isopeptide (Lys-Gly) (interchain with G-Cter in SUMO2) cross-links involve residues lysine 181 and lysine 182. The span at asparagine 187–threonine 212 shows a compositional bias: polar residues. Positions proline 323–proline 334 are enriched in low complexity. Serine 362 carries the post-translational modification Phosphoserine. The tract at residues glutamate 364–alanine 403 is disordered. 2 C2H2-type zinc fingers span residues proline 472 to histidine 494 and tyrosine 500 to histidine 523. The span at aspartate 526–proline 535 shows a compositional bias: basic and acidic residues. Residues aspartate 526–isoleucine 574 form a disordered region. Lysine 532 is covalently cross-linked (Glycyl lysine isopeptide (Lys-Gly) (interchain with G-Cter in SUMO2)). Serine 549 bears the Phosphoserine mark.

The protein localises to the nucleus. May be involved in transcriptional regulation. This Homo sapiens (Human) protein is Zinc finger and BTB domain-containing protein 3 (ZBTB3).